A 340-amino-acid chain; its full sequence is Guanine nucleotide-binding protein G(I)/G(S)/G(T) subunit beta-1 (340 aa).

At Ser-2 the chain carries N-acetylserine. Ser-2 is subject to Phosphoserine. WD repeat units lie at residues 46-94 (RTRR…HAIP), 95-140 (LRSS…RELA), 141-181 (GHTG…TTFT), 182-223 (GHTG…QTFT), 224-267 (GHES…YSHD), 268-309 (NIIC…GVLA), and 310-340 (GHDNRVSCLGVTDDGMAVATGSWDSFLKIWN). His-266 bears the Phosphohistidine mark.

This sequence belongs to the WD repeat G protein beta family. As to quaternary structure, g proteins are composed of 3 units, alpha, beta and gamma. The heterodimer formed by GNB1 and GNG2 interacts with ARHGEF5. The heterodimer formed by GNB1 and GNG2 interacts with GRK2. Forms a complex with GNAO1 and GNG3. Interacts with ARHGEF18 and RASD2. Forms complexes with TAS2R14 and G-proteins; these complexes play a role in the perception of bitterness. Component of the TAS2R14-GNAI1 complex, consisting of TAS2R14, GNAI1, GNB1 and GNG2. Component of the TAS2R14-GNAT3 complex, consisting of TAS2R14, GNAT3, GNB1 and GNG2. Component of the TAS2R14-GNAS2 complex, consisting of TAS2R14, GNAS2, GNB1 and GNG2. In terms of processing, phosphorylation at His-266 by NDKB contributes to G protein activation by increasing the high energetic phosphate transfer onto GDP.

Functionally, guanine nucleotide-binding proteins (G proteins) are involved as a modulator or transducer in various transmembrane signaling systems. The beta and gamma chains are required for the GTPase activity, for replacement of GDP by GTP, and for G protein-effector interaction. This Cricetulus griseus (Chinese hamster) protein is Guanine nucleotide-binding protein G(I)/G(S)/G(T) subunit beta-1 (GNB1).